A 442-amino-acid chain; its full sequence is D-aminoacyl-tRNA deacylase (442 aa).

It belongs to the DtdA deacylase family. As to quaternary structure, monomer. The cofactor is Zn(2+).

It catalyses the reaction a D-aminoacyl-tRNA + H2O = a tRNA + a D-alpha-amino acid + H(+). The enzyme catalyses glycyl-tRNA(Ala) + H2O = tRNA(Ala) + glycine + H(+). Functionally, D-aminoacyl-tRNA deacylase with broad substrate specificity. By recycling D-aminoacyl-tRNA to D-amino acids and free tRNA molecules, this enzyme counteracts the toxicity associated with the formation of D-aminoacyl-tRNA entities in vivo. This is D-aminoacyl-tRNA deacylase from Methanospirillum hungatei JF-1 (strain ATCC 27890 / DSM 864 / NBRC 100397 / JF-1).